We begin with the raw amino-acid sequence, 364 residues long: Peptide chain release factor 1 (364 aa).

Residue Gln-238 is modified to N5-methylglutamine.

The protein belongs to the prokaryotic/mitochondrial release factor family. Post-translationally, methylated by PrmC. Methylation increases the termination efficiency of RF1.

It is found in the cytoplasm. In terms of biological role, peptide chain release factor 1 directs the termination of translation in response to the peptide chain termination codons UAG and UAA. The polypeptide is Peptide chain release factor 1 (Psychrobacter sp. (strain PRwf-1)).